We begin with the raw amino-acid sequence, 93 residues long: Small ribosomal subunit protein bS20 (93 aa).

The segment covering 1 to 18 (MPLHKSAEKRLRQSEKRN) has biased composition (basic and acidic residues). Residues 1-25 (MPLHKSAEKRLRQSEKRNARNRARK) form a disordered region.

It belongs to the bacterial ribosomal protein bS20 family.

Its function is as follows. Binds directly to 16S ribosomal RNA. The protein is Small ribosomal subunit protein bS20 of Chlorobium chlorochromatii (strain CaD3).